Here is a 512-residue protein sequence, read N- to C-terminus: 2-isopropylmalate synthase (512 aa).

The region spanning 4–266 (IQFFDTTLRD…ETNIVLNQFK (263 aa)) is the Pyruvate carboxyltransferase domain. Residues Asp13, His201, His203, and Asn237 each contribute to the Mn(2+) site. The segment at 390 to 512 (ELKHLQVQYV…TKQVDFEEVK (123 aa)) is regulatory domain.

It belongs to the alpha-IPM synthase/homocitrate synthase family. LeuA type 1 subfamily. As to quaternary structure, homodimer. The cofactor is Mn(2+).

The protein resides in the cytoplasm. It catalyses the reaction 3-methyl-2-oxobutanoate + acetyl-CoA + H2O = (2S)-2-isopropylmalate + CoA + H(+). It participates in amino-acid biosynthesis; L-leucine biosynthesis; L-leucine from 3-methyl-2-oxobutanoate: step 1/4. In terms of biological role, catalyzes the condensation of the acetyl group of acetyl-CoA with 3-methyl-2-oxobutanoate (2-ketoisovalerate) to form 3-carboxy-3-hydroxy-4-methylpentanoate (2-isopropylmalate). The chain is 2-isopropylmalate synthase from Listeria welshimeri serovar 6b (strain ATCC 35897 / DSM 20650 / CCUG 15529 / CIP 8149 / NCTC 11857 / SLCC 5334 / V8).